A 207-amino-acid polypeptide reads, in one-letter code: Vascular endothelial growth factor B (207 aa).

The N-terminal stretch at 1-21 is a signal peptide; it reads MSPLLRRLLLVALLQLARTQA. 3 disulfide bridges follow: cysteine 47-cysteine 89, cysteine 78-cysteine 122, and cysteine 82-cysteine 124. Positions 129 to 139 are enriched in basic and acidic residues; that stretch reads KESAVKPDRVA. Residues 129–178 are disordered; it reads KESAVKPDRVAIPHHRPQPRSVPGWDSTPGASSPADIIHPTPAPGSSARL.

It belongs to the PDGF/VEGF growth factor family. As to quaternary structure, homodimer; disulfide-linked. Can also form heterodimer with VEGF. VEGF-B186 is O-glycosylated. Abundantly expressed in heart, brain, kidney and skeletal muscle.

The protein localises to the secreted. In terms of biological role, growth factor for endothelial cells. VEGF-B167 binds heparin and neuropilin-1 whereas the binding to neuropilin-1 of VEGF-B186 is regulated by proteolysis. VEGF-B seems to be required for normal heart function in adult but is not required for proper development of the cardiovascular system either during development or for angiogenesis in adults. This is Vascular endothelial growth factor B (Vegfb) from Mus musculus (Mouse).